A 143-amino-acid chain; its full sequence is Small ribosomal subunit protein uS12 (143 aa).

Basic residues predominate over residues 1-19 (MGKPRGLRTARKHVNHRRD). The tract at residues 1–23 (MGKPRGLRTARKHVNHRRDQRWA) is disordered. At proline 62 the chain carries 3-hydroxyproline.

It belongs to the universal ribosomal protein uS12 family. As to quaternary structure, component of the 40S small ribosomal subunit. In terms of processing, hydroxylation at Pro-62 affects translation termination efficiency.

Its subcellular location is the cytoplasm. The protein localises to the cytosol. It is found in the rough endoplasmic reticulum. The chain is Small ribosomal subunit protein uS12 (RpS23) from Drosophila melanogaster (Fruit fly).